A 237-amino-acid chain; its full sequence is Ribonuclease PH (237 aa).

Residues arginine 86 and 124 to 126 (GTR) each bind phosphate.

This sequence belongs to the RNase PH family. In terms of assembly, homohexameric ring arranged as a trimer of dimers.

The enzyme catalyses tRNA(n+1) + phosphate = tRNA(n) + a ribonucleoside 5'-diphosphate. Its function is as follows. Phosphorolytic 3'-5' exoribonuclease that plays an important role in tRNA 3'-end maturation. Removes nucleotide residues following the 3'-CCA terminus of tRNAs; can also add nucleotides to the ends of RNA molecules by using nucleoside diphosphates as substrates, but this may not be physiologically important. Probably plays a role in initiation of 16S rRNA degradation (leading to ribosome degradation) during starvation. The chain is Ribonuclease PH from Shewanella sp. (strain W3-18-1).